The chain runs to 105 residues: Neuropeptide-like protein 32 (105 aa).

Positions 1-22 are cleaved as a signal peptide; it reads MRQFNLLLVFCLIALTALPVFS. Positions 23–54 are excised as a propeptide; the sequence is FPNGLTMDSIDMEPMGAFDENGAADESPRVKR. Glycine 59 carries the glycine amide modification. Tryptophan 64 is subject to Tryptophan amide. Glycine amide is present on residues glycine 68, glycine 73, and glycine 80. Tryptophan 86 is subject to Tryptophan amide. 2 positions are modified to glycine amide: glycine 91 and glycine 98. Position 103 is a tryptophan amide (tryptophan 103).

It belongs to the YARP (YGGW-amide related peptide) family.

It localises to the secreted. Functionally, may have antimicrobial activity. The chain is Neuropeptide-like protein 32 (nlp-32) from Caenorhabditis elegans.